The sequence spans 411 residues: Citrate synthase (411 aa).

Catalysis depends on residues His304 and Asp363.

This sequence belongs to the citrate synthase family.

It carries out the reaction oxaloacetate + acetyl-CoA + H2O = citrate + CoA + H(+). Its pathway is carbohydrate metabolism; tricarboxylic acid cycle; isocitrate from oxaloacetate: step 1/2. The chain is Citrate synthase (gltA) from Rickettsia akari.